Consider the following 29-residue polypeptide: Kappa-sparatoxin-Hv1e (29 aa).

Cystine bridges form between cysteine 3/cysteine 17, cysteine 10/cysteine 22, and cysteine 16/cysteine 26.

As to expression, expressed by the venom gland.

The protein localises to the secreted. Its function is as follows. Inhibitor of voltage-gated potassium channels of the Kv4/KCND family. Blocks calcium channels (Cav). This is Kappa-sparatoxin-Hv1e from Heteropoda venatoria (Brown huntsman spider).